The following is a 452-amino-acid chain: tRNA modification GTPase MnmE (452 aa).

Residues R25, E81, and K120 each coordinate (6S)-5-formyl-5,6,7,8-tetrahydrofolate. In terms of domain architecture, TrmE-type G spans 216–375 (GITVVIAGEP…LKNHLKNTAG (160 aa)). Position 226 (N226) interacts with K(+). Residues 226-231 (NVGKSS), 245-251 (TDIAGTT), and 270-273 (DTAG) each bind GTP. Residue S230 participates in Mg(2+) binding. K(+) is bound by residues T245, I247, and T250. T251 is a Mg(2+) binding site. K452 lines the (6S)-5-formyl-5,6,7,8-tetrahydrofolate pocket.

The protein belongs to the TRAFAC class TrmE-Era-EngA-EngB-Septin-like GTPase superfamily. TrmE GTPase family. In terms of assembly, homodimer. Heterotetramer of two MnmE and two MnmG subunits. It depends on K(+) as a cofactor.

It is found in the cytoplasm. Its function is as follows. Exhibits a very high intrinsic GTPase hydrolysis rate. Involved in the addition of a carboxymethylaminomethyl (cmnm) group at the wobble position (U34) of certain tRNAs, forming tRNA-cmnm(5)s(2)U34. This is tRNA modification GTPase MnmE from Coxiella burnetii (strain Dugway 5J108-111).